We begin with the raw amino-acid sequence, 1030 residues long: Putative pentatricopeptide repeat-containing protein At5g06400, mitochondrial (1030 aa).

A mitochondrion-targeting transit peptide spans 1 to 77; it reads MKALFRFKSC…VKLDETTRLR (77 aa). PPR repeat units lie at residues 188–222, 223–257, 258–292, 293–323, 328–362, 363–393, 397–431, 432–466, 467–501, 502–536, 677–711, 712–746, 747–783, 784–814, 818–852, 853–887, 888–922, 923–957, and 958–992; these read RVGIYNTMLSIAGEARNLDMVDELVSEMEKNGCDK, DIRTWTILISVYGKAKKIGKGLLVFEKMRKSGFEL, DATAYNIMIRSLCIAGRGDLALEFYKEMMEKGITF, GLRTYKMLLDCIAKSEKVDVVQSIADDMVRI, EHDAFGYLLKSFCVSGKIKEALELIRELKNKEMCL, DAKYFEILVKGLCRANRMVDALEIVDIMKRR, DSNVYGIIISGYLRQNDVSKALEQFEVIKKSGRPP, RVSTYTEIMQHLFKLKQFEKGCNLFNEMIENGIEP, DSVAITAVVAGHLGQNRVAEAWKVFSSMEEKGIKP, TWKSYSIFVKELCRSSRYDEIIKIFNQMHASKIVI, NSEAYNMSIKVAGCGKDFKQMRSLFYEMRRQGCLI, TQDTWAIMIMQYGRTGLTNIAIRTFKEMKDMGLIP, SSSTFKCLITVLCEKKGRNVEEATRTFREMIRSGFVP, DRELVQDYLGCLCEVGNTKDAKSCLDSLGKI, VTVAYSIYIRALCRIGKLEEALSELASFEGERSLL, DQYTYGSIVHGLLQRGDLQKALDKVNSMKEIGTKP, GVHVYTSLIVYFFKEKQLEKVLETCQKMEGESCEP, SVVTYTAMICGYMSLGKVEEAWNAFRNMEERGTSP, and DFKTYSKFINCLCQACKSEDALKLLSEMLDKGIAP.

Belongs to the PPR family. P subfamily.

The protein resides in the mitochondrion. In Arabidopsis thaliana (Mouse-ear cress), this protein is Putative pentatricopeptide repeat-containing protein At5g06400, mitochondrial.